The following is a 124-amino-acid chain: Chemotaxis protein CheY1 (124 aa).

Positions 2–120 (KLLVVDDSST…VLKEKLEVVL (119 aa)) constitute a Response regulatory domain. Mg(2+) contacts are provided by Asp-7, Asp-8, Asp-53, and Asn-55. Asp-53 bears the 4-aspartylphosphate mark.

Interacts (when phosphorylated) with FliM. Mg(2+) serves as cofactor. In terms of processing, phosphorylated by CheAY. Dephosphorylated (inactivated) by CheZ.

It localises to the cytoplasm. In terms of biological role, chemotactic response regulator protein that modulates the rotation direction of bacterial flagellar motors. Plays an important role in the colonization and infection of Helicobacter pylori. Upon phosphorylation by CheA, interacts with the flagellar motor protein FliM to cause clockwise flagellar rotation and bacterial reversals, as opposed to straight swimming when CheY1 is not phosphorylated. In Helicobacter pylori (strain J99 / ATCC 700824) (Campylobacter pylori J99), this protein is Chemotaxis protein CheY1 (cheY1).